Consider the following 236-residue polypeptide: UPF0502 protein Bamb_4889 (236 aa).

Belongs to the UPF0502 family.

The protein is UPF0502 protein Bamb_4889 of Burkholderia ambifaria (strain ATCC BAA-244 / DSM 16087 / CCUG 44356 / LMG 19182 / AMMD) (Burkholderia cepacia (strain AMMD)).